The sequence spans 593 residues: ETS-related transcription factor Elf-2 (593 aa).

Serine 107 bears the Phosphoserine mark. The disordered stretch occupies residues 146–201; the sequence is VEVSTEESEPMDTSPIPTSPDSHEPMKKKKVGRKPKTQQSPISNGSPELGIKKKPR. The span at 171-181 shows a compositional bias: basic residues; that stretch reads MKKKKVGRKPK. A Phosphothreonine modification is found at threonine 182. A compositionally biased stretch (polar residues) spans 182–191; it reads TQQSPISNGS. 2 positions are modified to phosphoserine: serine 185 and serine 191. Positions 208–290 form a DNA-binding region, ETS; sequence TYLWEFLLDL…EGQRLVYQFK (83 aa). Phosphoserine occurs at positions 363 and 372. A Phosphothreonine modification is found at threonine 376. Serine 430 carries the post-translational modification Phosphoserine. Arginine 494 carries the omega-N-methylarginine modification. Threonine 521 carries the phosphothreonine modification. Lysine 536 is covalently cross-linked (Glycyl lysine isopeptide (Lys-Gly) (interchain with G-Cter in SUMO2)).

The protein belongs to the ETS family. Interacts with the LIM domains of LMO2. Interacts via its N-terminal region with RUNX1. In terms of tissue distribution, expressed in all fetal and adult tissues examined. Among fetal tissues, highest levels of expression detected in heart, lung, liver and kidney, and lower levels in brain. Among adult tissues, highest levels of expression detected in heart, placenta, lung, skeletal muscle, spleen, thymus, testis and ovary. Moderate expression in prostate, small intestine, kidney, liver and pancreas, and weak expression in colon, brain and peripheral blood lymphocytes.

The protein resides in the nucleus. Its function is as follows. Isoform 1 transcriptionally activates the LYN and BLK promoters and acts synergistically with RUNX1 to transactivate the BLK promoter. Isoform 2 may function in repression of RUNX1-mediated transactivation. This chain is ETS-related transcription factor Elf-2, found in Homo sapiens (Human).